Consider the following 77-residue polypeptide: Acyl carrier protein (77 aa).

Positions 2-77 (STIEERVKKI…EAIDYVVSHQ (76 aa)) constitute a Carrier domain. Residue S37 is modified to O-(pantetheine 4'-phosphoryl)serine.

Belongs to the acyl carrier protein (ACP) family. 4'-phosphopantetheine is transferred from CoA to a specific serine of apo-ACP by AcpS. This modification is essential for activity because fatty acids are bound in thioester linkage to the sulfhydryl of the prosthetic group.

Its subcellular location is the cytoplasm. It functions in the pathway lipid metabolism; fatty acid biosynthesis. Functionally, carrier of the growing fatty acid chain in fatty acid biosynthesis. This Oceanospirillum linum protein is Acyl carrier protein.